Here is a 127-residue protein sequence, read N- to C-terminus: Putative pre-16S rRNA nuclease (127 aa).

It belongs to the YqgF nuclease family.

Its subcellular location is the cytoplasm. Its function is as follows. Could be a nuclease involved in processing of the 5'-end of pre-16S rRNA. The protein is Putative pre-16S rRNA nuclease of Campylobacter jejuni subsp. jejuni serotype O:23/36 (strain 81-176).